The primary structure comprises 404 residues: Argininosuccinate synthase (404 aa).

Residues 11–19 (AYSGGLDTS) and Ala38 contribute to the ATP site. L-citrulline contacts are provided by Tyr91 and Ser96. An ATP-binding site is contributed by Gly121. The L-aspartate site is built by Thr123, Asn127, and Asp128. Asn127 lines the L-citrulline pocket. Residues Arg131, Ser181, Ser190, Glu266, and Tyr278 each contribute to the L-citrulline site.

Belongs to the argininosuccinate synthase family. Type 1 subfamily. In terms of assembly, homotetramer.

Its subcellular location is the cytoplasm. The catalysed reaction is L-citrulline + L-aspartate + ATP = 2-(N(omega)-L-arginino)succinate + AMP + diphosphate + H(+). The protein operates within amino-acid biosynthesis; L-arginine biosynthesis; L-arginine from L-ornithine and carbamoyl phosphate: step 2/3. The protein is Argininosuccinate synthase of Sulfurimonas denitrificans (strain ATCC 33889 / DSM 1251) (Thiomicrospira denitrificans (strain ATCC 33889 / DSM 1251)).